Here is a 556-residue protein sequence, read N- to C-terminus: U3 small nucleolar RNA-associated protein 18 homolog (556 aa).

Residues 1 to 24 (MPPERRRRMKLDRRTGAKPKRKPG) show a composition bias toward basic residues. The segment at 1-70 (MPPERRRRMK…IAVAAAEEER (70 aa)) is disordered. Positions 43 to 65 (APSSQRKPPARPSAAAAAIAVAA) are enriched in low complexity. A Glycyl lysine isopeptide (Lys-Gly) (interchain with G-Cter in SUMO2) cross-link involves residue lysine 84. Positions 111 to 143 (RGPRVQEHEDSGDSEVENEAKGNFPPQKKPVWV) are disordered. Residues serine 121 and serine 124 each carry the phosphoserine modification. Glycyl lysine isopeptide (Lys-Gly) (interchain with G-Cter in SUMO2) cross-links involve residues lysine 183 and lysine 201. The interval 193–219 (VPAWAETTKRKTSSDDESEEDEDDLLQ) is disordered. Threonine 204 carries the phosphothreonine modification. A phosphoserine mark is found at serine 205, serine 206, and serine 210. A compositionally biased stretch (acidic residues) spans 207–216 (DDESEEDEDD). Phosphothreonine is present on threonine 221. 6 WD repeats span residues 249–288 (PTVA…NPKI), 293–333 (LERF…LIPV), 339–380 (LKEK…GSMK), 381–419 (INGR…CLNR), 421–462 (VDEG…QETN), and 471–512 (NLVT…VFSN). Residue lysine 517 forms a Glycyl lysine isopeptide (Lys-Gly) (interchain with G-Cter in SUMO2) linkage.

This sequence belongs to the WD repeat UTP18 family. Part of the small subunit (SSU) processome, composed of more than 70 proteins and the RNA chaperone small nucleolar RNA (snoRNA) U3.

Its subcellular location is the nucleus. It is found in the nucleolus. In terms of biological role, part of the small subunit (SSU) processome, first precursor of the small eukaryotic ribosomal subunit. During the assembly of the SSU processome in the nucleolus, many ribosome biogenesis factors, an RNA chaperone and ribosomal proteins associate with the nascent pre-rRNA and work in concert to generate RNA folding, modifications, rearrangements and cleavage as well as targeted degradation of pre-ribosomal RNA by the RNA exosome. Involved in nucleolar processing of pre-18S ribosomal RNA. This chain is U3 small nucleolar RNA-associated protein 18 homolog, found in Homo sapiens (Human).